Here is a 196-residue protein sequence, read N- to C-terminus: Nucleoid occlusion factor SlmA (196 aa).

In terms of domain architecture, HTH tetR-type spans 6-66 (RNRREEILQA…GLIEFVEDTL (61 aa)). Positions 29–48 (TTAKLAANLGVSEAALYRHF) form a DNA-binding region, H-T-H motif. Residues 108 to 135 (DALMGEHDRLRGRMEDLFNRIESSIKQI) adopt a coiled-coil conformation.

This sequence belongs to the nucleoid occlusion factor SlmA family. As to quaternary structure, homodimer. Interacts with FtsZ.

The protein resides in the cytoplasm. The protein localises to the nucleoid. In terms of biological role, required for nucleoid occlusion (NO) phenomenon, which prevents Z-ring formation and cell division over the nucleoid. Acts as a DNA-associated cell division inhibitor that binds simultaneously chromosomal DNA and FtsZ, and disrupts the assembly of FtsZ polymers. SlmA-DNA-binding sequences (SBS) are dispersed on non-Ter regions of the chromosome, preventing FtsZ polymerization at these regions. In Idiomarina loihiensis (strain ATCC BAA-735 / DSM 15497 / L2-TR), this protein is Nucleoid occlusion factor SlmA.